We begin with the raw amino-acid sequence, 464 residues long: NADH dehydrogenase [ubiquinone] flavoprotein 1, mitochondrial (464 aa).

The N-terminal 20 residues, 1-20, are a transit peptide targeting the mitochondrion; that stretch reads MLATRRLLGWSLPARVSVRF. Residue lysine 81 is modified to N6-acetyllysine; alternate. Position 81 is an N6-succinyllysine; alternate (lysine 81). 87–96 contributes to the NADH binding site; the sequence is GRGGAGFPTG. The residue at position 104 (lysine 104) is an N6-acetyllysine. An FMN-binding site is contributed by 199-247; sequence RGAGAYICGEETALIESIEGKQGKPRLKPPFPADVGVFGCPTTVANVET. The residue at position 257 (arginine 257) is an Omega-N-methylarginine. N6-acetyllysine is present on lysine 375. [4Fe-4S] cluster contacts are provided by cysteine 379, cysteine 382, cysteine 385, and cysteine 425.

It belongs to the complex I 51 kDa subunit family. As to quaternary structure, core subunit of respiratory chain NADH dehydrogenase (Complex I) which is composed of 45 different subunits. This is a component of the flavoprotein-sulfur (FP) fragment of the enzyme. Interacts with RAB5IF. It depends on FMN as a cofactor. Requires [4Fe-4S] cluster as cofactor.

The protein localises to the mitochondrion inner membrane. It catalyses the reaction a ubiquinone + NADH + 5 H(+)(in) = a ubiquinol + NAD(+) + 4 H(+)(out). Core subunit of the mitochondrial membrane respiratory chain NADH dehydrogenase (Complex I) which catalyzes electron transfer from NADH through the respiratory chain, using ubiquinone as an electron acceptor. Part of the peripheral arm of the enzyme, where the electrons from NADH are accepted by flavin mononucleotide (FMN) and then passed along a chain of iron-sulfur clusters by electron tunnelling to the final acceptor ubiquinone. Contains FMN, which is the initial electron acceptor as well as one iron-sulfur cluster. This Pan troglodytes (Chimpanzee) protein is NADH dehydrogenase [ubiquinone] flavoprotein 1, mitochondrial.